A 157-amino-acid polypeptide reads, in one-letter code: Transcriptional repressor NrdR (157 aa).

The segment at 3–34 (CPFCGHAESQVKDSRPSEDGAAIRRRRMCPEC) is a zinc-finger region. One can recognise an ATP-cone domain in the interval 49–139 (LIIVKRSGRR…VYRDFKETSD (91 aa)).

Belongs to the NrdR family. The cofactor is Zn(2+).

Functionally, negatively regulates transcription of bacterial ribonucleotide reductase nrd genes and operons by binding to NrdR-boxes. This is Transcriptional repressor NrdR from Caulobacter vibrioides (strain ATCC 19089 / CIP 103742 / CB 15) (Caulobacter crescentus).